The sequence spans 603 residues: Replication protein E1 (603 aa).

The segment at 47-68 is disordered; sequence DDNDLEQGNSRELFHQQESKES. A compositionally biased stretch (basic and acidic residues) spans 58 to 68; it reads ELFHQQESKES. Residues 76-78 carry the Nuclear localization signal motif; the sequence is KRK. Residues serine 81 and serine 89 each carry the phosphoserine; by host modification. Residues 88 to 97 carry the Nuclear export signal motif; the sequence is LSPRLESITL. The DNA-binding region stretch occupies residues 143–306; it reads QLGTVDIHYK…TIVGHQSTEA (164 aa). The SF3 helicase domain maps to 405–555; sequence VNFIMFLAAL…FPMKADNTPE (151 aa). 431 to 438 is a binding site for ATP; the sequence is GPPNTGKS. A Glycyl lysine isopeptide (Lys-Gly) (interchain with G-Cter in SUMO) cross-link involves residue lysine 512. The interval 578–603 is disordered; it reads DQEDEGENGESQRSFQCSARSANEHL. Over residues 586–603 the composition is skewed to polar residues; sequence GESQRSFQCSARSANEHL.

Belongs to the papillomaviridae E1 protein family. As to quaternary structure, can form hexamers. Interacts with E2 protein; this interaction increases E1 DNA binding specificity. Interacts with host DNA polymerase subunit POLA2. Interacts with host single stranded DNA-binding protein RPA1. Interacts with host TOP1; this interaction stimulates the enzymatic activity of TOP1. Phosphorylated. In terms of processing, sumoylated.

Its subcellular location is the host nucleus. The catalysed reaction is Couples ATP hydrolysis with the unwinding of duplex DNA by translocating in the 3'-5' direction.. The enzyme catalyses ATP + H2O = ADP + phosphate + H(+). In terms of biological role, ATP-dependent DNA 3'-5' helicase required for initiation of viral DNA replication. It forms a complex with the viral E2 protein. The E1-E2 complex binds to the replication origin which contains binding sites for both proteins. During the initial step, a dimer of E1 interacts with a dimer of protein E2 leading to a complex that binds the viral origin of replication with high specificity. Then, a second dimer of E1 displaces the E2 dimer in an ATP-dependent manner to form the E1 tetramer. Following this, two E1 monomers are added to each half of the site, which results in the formation of two E1 trimers on the viral ori. Subsequently, two hexamers will be created. The double hexamer acts as a bi-directional helicase machinery and unwinds the viral DNA and then recruits the host DNA polymerase to start replication. The sequence is that of Replication protein E1 from Human papillomavirus 21.